The chain runs to 286 residues: Shikimate dehydrogenase (NADP(+)) (286 aa).

Residues S22–S24 and T71 each bind shikimate. Catalysis depends on K75, which acts as the Proton acceptor. Residue E87 participates in NADP(+) binding. Positions 96 and 111 each coordinate shikimate. Residues G136–A140, N160–R165, and I225 contribute to the NADP(+) site. Residue Y227 coordinates shikimate. G248 lines the NADP(+) pocket.

It belongs to the shikimate dehydrogenase family. As to quaternary structure, homodimer.

It carries out the reaction shikimate + NADP(+) = 3-dehydroshikimate + NADPH + H(+). The protein operates within metabolic intermediate biosynthesis; chorismate biosynthesis; chorismate from D-erythrose 4-phosphate and phosphoenolpyruvate: step 4/7. In terms of biological role, involved in the biosynthesis of the chorismate, which leads to the biosynthesis of aromatic amino acids. Catalyzes the reversible NADPH linked reduction of 3-dehydroshikimate (DHSA) to yield shikimate (SA). This chain is Shikimate dehydrogenase (NADP(+)), found in Rhizobium meliloti (strain 1021) (Ensifer meliloti).